Consider the following 338-residue polypeptide: POU domain, class 4, transcription factor 3 (338 aa).

Positions 56–65 (RAEALAAVDI) match the POU-IV box motif. The 78-residue stretch at 179 to 256 (DVESDPRELE…VLQAWLEEAE (78 aa)) folds into the POU-specific domain. A DNA-binding region (homeobox) is located at residues 274-333 (RKRKRTSIAAPEKRSLEAYFAIQPRPSSEKIAAIAEKLDLKKNVVRVWFCNQRQKQKRMK).

This sequence belongs to the POU transcription factor family. Class-4 subfamily. As to quaternary structure, interacts with ISL1. Brain. Seems to be specific to the retina.

It is found in the nucleus. The protein resides in the cytoplasm. In terms of biological role, acts as a transcriptional activator. Acts by binding to sequences related to the consensus octamer motif 5'-ATGCAAAT-3' in the regulatory regions of its target genes. Involved in the auditory system development, required for terminal differentiation of hair cells in the inner ear. This is POU domain, class 4, transcription factor 3 (POU4F3) from Homo sapiens (Human).